A 377-amino-acid chain; its full sequence is uncharacterized protein (377 aa).

The next 4 membrane-spanning stretches (helical) occupy residues 26–46 (TFQN…VVAI), 67–87 (TVGS…WVII), 108–128 (FLTF…ISLT), and 135–155 (IDYG…ALYI).

It localises to the cell membrane. This is an uncharacterized protein from Methanocaldococcus jannaschii (strain ATCC 43067 / DSM 2661 / JAL-1 / JCM 10045 / NBRC 100440) (Methanococcus jannaschii).